Consider the following 202-residue polypeptide: Holliday junction branch migration complex subunit RuvA (202 aa).

Positions 1-64 (MIGYLKGQIL…YDGTVLYGFL (64 aa)) are domain I. Residues 65–146 (TKEDKQLWAI…AVTIAGVPKI (82 aa)) form a domain II region. Positions 147 to 155 (KIEGEAPFM) are flexible linker. The interval 155–202 (MSEVMMALTALGYSPMEARKAIDQLYKTGLANDSVENIIRAALRILKK) is domain III.

Belongs to the RuvA family. In terms of assembly, homotetramer. Forms an RuvA(8)-RuvB(12)-Holliday junction (HJ) complex. HJ DNA is sandwiched between 2 RuvA tetramers; dsDNA enters through RuvA and exits via RuvB. An RuvB hexamer assembles on each DNA strand where it exits the tetramer. Each RuvB hexamer is contacted by two RuvA subunits (via domain III) on 2 adjacent RuvB subunits; this complex drives branch migration. In the full resolvosome a probable DNA-RuvA(4)-RuvB(12)-RuvC(2) complex forms which resolves the HJ.

The protein resides in the cytoplasm. Its function is as follows. The RuvA-RuvB-RuvC complex processes Holliday junction (HJ) DNA during genetic recombination and DNA repair, while the RuvA-RuvB complex plays an important role in the rescue of blocked DNA replication forks via replication fork reversal (RFR). RuvA specifically binds to HJ cruciform DNA, conferring on it an open structure. The RuvB hexamer acts as an ATP-dependent pump, pulling dsDNA into and through the RuvAB complex. HJ branch migration allows RuvC to scan DNA until it finds its consensus sequence, where it cleaves and resolves the cruciform DNA. This Elusimicrobium minutum (strain Pei191) protein is Holliday junction branch migration complex subunit RuvA.